Reading from the N-terminus, the 205-residue chain is High frequency lysogenization protein HflD homolog (205 aa).

It belongs to the HflD family.

Its subcellular location is the cytoplasm. The protein resides in the cell inner membrane. This Haemophilus influenzae (strain ATCC 51907 / DSM 11121 / KW20 / Rd) protein is High frequency lysogenization protein HflD homolog.